Consider the following 146-residue polypeptide: Ribosome maturation factor RimP (146 aa).

Belongs to the RimP family.

Its subcellular location is the cytoplasm. Required for maturation of 30S ribosomal subunits. In Helicobacter pylori (strain G27), this protein is Ribosome maturation factor RimP.